The primary structure comprises 247 residues: Carboxy-S-adenosyl-L-methionine synthase (247 aa).

S-adenosyl-L-methionine contacts are provided by residues tyrosine 40, 65-67, 90-91, 122-123, asparagine 137, and arginine 204; these read GAS, DN, and DI.

Belongs to the class I-like SAM-binding methyltransferase superfamily. Cx-SAM synthase family. Homodimer.

The catalysed reaction is prephenate + S-adenosyl-L-methionine = carboxy-S-adenosyl-L-methionine + 3-phenylpyruvate + H2O. Catalyzes the conversion of S-adenosyl-L-methionine (SAM) to carboxy-S-adenosyl-L-methionine (Cx-SAM). The sequence is that of Carboxy-S-adenosyl-L-methionine synthase from Ectopseudomonas mendocina (strain ymp) (Pseudomonas mendocina).